Here is a 262-residue protein sequence, read N- to C-terminus: Ribosomal RNA small subunit methyltransferase A (262 aa).

S-adenosyl-L-methionine-binding residues include N13, L15, G40, E61, D85, and N105.

Belongs to the class I-like SAM-binding methyltransferase superfamily. rRNA adenine N(6)-methyltransferase family. RsmA subfamily.

The protein localises to the cytoplasm. It carries out the reaction adenosine(1518)/adenosine(1519) in 16S rRNA + 4 S-adenosyl-L-methionine = N(6)-dimethyladenosine(1518)/N(6)-dimethyladenosine(1519) in 16S rRNA + 4 S-adenosyl-L-homocysteine + 4 H(+). In terms of biological role, specifically dimethylates two adjacent adenosines (A1518 and A1519) in the loop of a conserved hairpin near the 3'-end of 16S rRNA in the 30S particle. May play a critical role in biogenesis of 30S subunits. This Laribacter hongkongensis (strain HLHK9) protein is Ribosomal RNA small subunit methyltransferase A.